We begin with the raw amino-acid sequence, 238 residues long: Proteasome subunit beta type-6 (238 aa).

The residue at position 2 (Ala2) is an N-acetylalanine. Positions 2–33 (AAALAVRRAGSAPAFGPEALTPDWENREVSTG) are cleaved as a propeptide — removed in mature form. Thr34 serves as the catalytic Nucleophile. At Thr68 the chain carries Phosphothreonine.

The protein belongs to the peptidase T1B family. As to quaternary structure, the 26S proteasome consists of a 20S proteasome core and two 19S regulatory subunits. The 20S proteasome core is a barrel-shaped complex made of 28 subunits that are arranged in four stacked rings. The two outer rings are each formed by seven alpha subunits, and the two inner rings are formed by seven beta subunits. The proteolytic activity is exerted by three beta-subunits PSMB5, PSMB6 and PSMB7.

It localises to the cytoplasm. The protein localises to the nucleus. It carries out the reaction Cleavage of peptide bonds with very broad specificity.. Component of the 20S core proteasome complex involved in the proteolytic degradation of most intracellular proteins. This complex plays numerous essential roles within the cell by associating with different regulatory particles. Associated with two 19S regulatory particles, forms the 26S proteasome and thus participates in the ATP-dependent degradation of ubiquitinated proteins. The 26S proteasome plays a key role in the maintenance of protein homeostasis by removing misfolded or damaged proteins that could impair cellular functions, and by removing proteins whose functions are no longer required. Associated with the PA200 or PA28, the 20S proteasome mediates ubiquitin-independent protein degradation. This type of proteolysis is required in several pathways including spermatogenesis (20S-PA200 complex) or generation of a subset of MHC class I-presented antigenic peptides (20S-PA28 complex). Within the 20S core complex, PSMB6 displays a peptidylglutamyl-hydrolyzing activity also termed postacidic or caspase-like activity, meaning that the peptides bond hydrolysis occurs directly after acidic residues. The sequence is that of Proteasome subunit beta type-6 (Psmb6) from Mus musculus (Mouse).